The chain runs to 832 residues: Golgin subfamily A member 6-like protein 24 (832 aa).

5 disordered regions span residues Met1 to Leu107, Gln303 to Gln333, Met351 to Arg431, Gln508 to Glu652, and Gln664 to His832. The span at Leu13–Thr27 shows a compositional bias: basic residues. The span at Met37–Pro58 shows a compositional bias: basic and acidic residues. Polar residues-rich tracts occupy residues Gln59–Ser69 and Asn77–Gly89. A compositionally biased stretch (basic and acidic residues) spans Ser92 to Leu107. Residues Leu163–Lys828 are a coiled coil. Composition is skewed to basic and acidic residues over residues Gln664–Glu684 and Gln692–His832.

The protein belongs to the GOLGA6 family.

This Homo sapiens (Human) protein is Golgin subfamily A member 6-like protein 24.